The primary structure comprises 257 residues: GTP cyclohydrolase 1 type 2 homolog (257 aa).

A divalent metal cation is bound by residues His65, Asp103, His221, and Glu224.

The protein belongs to the GTP cyclohydrolase I type 2/NIF3 family. Homohexamer.

This Lactococcus lactis subsp. lactis (strain IL1403) (Streptococcus lactis) protein is GTP cyclohydrolase 1 type 2 homolog (ykiD).